The chain runs to 246 residues: Acetoacetate decarboxylase (246 aa).

The Schiff-base intermediate with acetoacetate role is filled by lysine 116.

It belongs to the ADC family.

It catalyses the reaction acetoacetate + H(+) = acetone + CO2. Functionally, catalyzes the conversion of acetoacetate to acetone and carbon dioxide. This chain is Acetoacetate decarboxylase, found in Burkholderia cenocepacia (strain ATCC BAA-245 / DSM 16553 / LMG 16656 / NCTC 13227 / J2315 / CF5610) (Burkholderia cepacia (strain J2315)).